The following is a 772-amino-acid chain: Endoplasmic reticulum membrane sensor NFE2L1 (772 aa).

Residues 7–24 (YLTEGLLQFTILLSLIGV) traverse the membrane as a helical; Signal-anchor for type II membrane protein segment. The disordered stretch occupies residues 108–148 (DPEGSVSGSQPNSGLALESSSGLQDVTGPDNGVRESETEQG). A compositionally biased stretch (polar residues) spans 113–131 (VSGSQPNSGLALESSSGLQ). Residues 191 to 199 (VFDYSHRQK) are cholesterol recognition/amino acid consensus (CRAC) region. Asn-348 is a glycosylation site (N-linked (GlcNAc...) asparagine). The segment at 379 to 383 (SPEVE) is CPD. Residues Asn-412 and Asn-423 are each glycosylated (N-linked (GlcNAc...) asparagine). The interval 470-532 (EEEFDSDSGL…AVGYSSDSET (63 aa)) is disordered. Residues 476 to 480 (DSGLS) carry the Destruction motif motif. Over residues 476–523 (DSGLSLDSSHSPSSLSSSEGSSSSSSSSSSSSSSASSSASSSFSEEGA) the composition is skewed to low complexity. Phosphoserine; by CK2 is present on Ser-528. Ser-599 bears the Phosphoserine; by PKA mark. The bZIP domain maps to 654 to 717 (LIRDIRRRGK…RQMKQKVQSL (64 aa)). Residues 656 to 675 (RDIRRRGKNKMAAQNCRKRK) form a basic motif region. Positions 682 to 696 (LERDVEDLQRDKARL) are leucine-zipper. A disordered region spans residues 753-772 (RTMADQQARRQERKPKDRRK). A Nuclear localization signal motif is present at residues 761 to 768 (RRQERKPK). The segment covering 763-772 (QERKPKDRRK) has biased composition (basic residues).

It belongs to the bZIP family. CNC subfamily. Interacts with KEAP1. In terms of assembly, interacts (via CPD region) with FBXW7; leading to its ubiquitination and degradation. Interacts with SYVN1/HRD1; leading to its ubiquitination and degradation. Interacts (when ubiquitinated) with DDI2; leading to its cleavage. As to quaternary structure, interacts (via the bZIP domain) with small MAF protein (MAFF, MAFG or MAFK); required for binding to antioxidant response elements (AREs) on DNA. Interacts (via Destruction motif) with BTRC; leading to its ubiquitination and degradation. Interacts with CEBPB; the heterodimer represses expression of DSPP during odontoblast differentiation. Interacts with MOTS-c, a peptide produced by the mitochondrially encoded 12S rRNA MT-RNR1. Post-translationally, cleaved at Leu-104 by the aspartyl protease DDI2 following retrotranslocation, releasing the protein from the endoplasmic reticulum membrane and forming the transcription factor NRF1 that translocates into the nucleus. Ubiquitination is prerequisite for cleavage by aspartyl protease DDI2. In terms of processing, N-glycosylated in normal conditions, when it has a single-pass type II membrane protein topology, with the DNA-binding domain facing the endoplasmic reticulum lumen. Deglycosylated during retrotranslocation to the cytosolic side of the membrane, to have a single-pass type III membrane protein topology with the major part of the protein facing the cytosol. Ubiquitinated by the SCF(FBXW7) complex and SYVN1/HRD1, leading to its degradation by the proteasome. Ubiquitinated during retrotranslocation to the cytosolic side of the membrane: ubiquitination does not lead to degradation and is required for processing by the aspartyl protease DDI2 and subsequent release from the endoplasmic reticulum membrane. Post-translationally, phosphorylation by CK2 at Ser-528 inhibits transcription factor activity, possibly by affecting DNA-binding activity. Phosphorylation at Ser-599 is required for interaction with CEBPB. In terms of processing, ubiquitinated by the SCF(BTRC) complex in the nucleus, leading to its degradation by the proteasome.

It localises to the endoplasmic reticulum membrane. It is found in the nucleus. In terms of biological role, endoplasmic reticulum membrane sensor that translocates into the nucleus in response to various stresses to act as a transcription factor. Constitutes a precursor of the transcription factor NRF1. Able to detect various cellular stresses, such as cholesterol excess, oxidative stress or proteasome inhibition. In response to stress, it is released from the endoplasmic reticulum membrane following cleavage by the protease DDI2 and translocates into the nucleus to form the transcription factor NRF1. Acts as a key sensor of cholesterol excess: in excess cholesterol conditions, the endoplasmic reticulum membrane form of the protein directly binds cholesterol via its CRAC motif, preventing cleavage and release of the transcription factor NRF1, thereby allowing expression of genes promoting cholesterol removal, such as CD36. Involved in proteasome homeostasis: in response to proteasome inhibition, it is released from the endoplasmic reticulum membrane, translocates to the nucleus and activates expression of genes encoding proteasome subunits. Its function is as follows. CNC-type bZIP family transcription factor that translocates to the nucleus and regulates expression of target genes in response to various stresses. Heterodimerizes with small-Maf proteins (MAFF, MAFG or MAFK) and binds DNA motifs including the antioxidant response elements (AREs), which regulate expression of genes involved in oxidative stress response. Activates or represses expression of target genes, depending on the context. Plays a key role in cholesterol homeostasis by acting as a sensor of cholesterol excess: in low cholesterol conditions, translocates into the nucleus and represses expression of genes involved in defense against cholesterol excess, such as CD36. In excess cholesterol conditions, the endoplasmic reticulum membrane form of the protein directly binds cholesterol via its CRAC motif, preventing cleavage and release of the transcription factor NRF1, thereby allowing expression of genes promoting cholesterol removal. Critical for redox balance in response to oxidative stress: acts by binding the AREs motifs on promoters and mediating activation of oxidative stress response genes, such as GCLC, GCLM, GSS, MT1 and MT2. Plays an essential role during fetal liver hematopoiesis: probably has a protective function against oxidative stress and is involved in lipid homeostasis in the liver. Involved in proteasome homeostasis: in response to proteasome inhibition, mediates the 'bounce-back' of proteasome subunits by translocating into the nucleus and activating expression of genes encoding proteasome subunits. Also involved in regulating glucose flux. Together with CEBPB; represses expression of DSPP during odontoblast differentiation. In response to ascorbic acid induction, activates expression of SP7/Osterix in osteoblasts. This chain is Endoplasmic reticulum membrane sensor NFE2L1, found in Pongo abelii (Sumatran orangutan).